Reading from the N-terminus, the 454-residue chain is Methylenetetrahydrofolate--tRNA-(uracil-5-)-methyltransferase TrmFO (454 aa).

9–14 (GAGLAG) contacts FAD. The interval 432–454 (LERVSPPSRETGEPTGAEQVDLA) is disordered.

Belongs to the MnmG family. TrmFO subfamily. Requires FAD as cofactor.

Its subcellular location is the cytoplasm. It carries out the reaction uridine(54) in tRNA + (6R)-5,10-methylene-5,6,7,8-tetrahydrofolate + NADH + H(+) = 5-methyluridine(54) in tRNA + (6S)-5,6,7,8-tetrahydrofolate + NAD(+). The catalysed reaction is uridine(54) in tRNA + (6R)-5,10-methylene-5,6,7,8-tetrahydrofolate + NADPH + H(+) = 5-methyluridine(54) in tRNA + (6S)-5,6,7,8-tetrahydrofolate + NADP(+). Its function is as follows. Catalyzes the folate-dependent formation of 5-methyl-uridine at position 54 (M-5-U54) in all tRNAs. This chain is Methylenetetrahydrofolate--tRNA-(uracil-5-)-methyltransferase TrmFO, found in Pelobacter propionicus (strain DSM 2379 / NBRC 103807 / OttBd1).